We begin with the raw amino-acid sequence, 307 residues long: Aspartate carbamoyltransferase catalytic subunit (307 aa).

Residues Arg-58 and Thr-59 each coordinate carbamoyl phosphate. Lys-86 contributes to the L-aspartate binding site. Carbamoyl phosphate is bound by residues Arg-108, His-138, and Gln-141. Positions 171 and 223 each coordinate L-aspartate. Residues Ala-264 and Pro-265 each coordinate carbamoyl phosphate.

The protein belongs to the aspartate/ornithine carbamoyltransferase superfamily. ATCase family. As to quaternary structure, heterododecamer (2C3:3R2) of six catalytic PyrB chains organized as two trimers (C3), and six regulatory PyrI chains organized as three dimers (R2).

It catalyses the reaction carbamoyl phosphate + L-aspartate = N-carbamoyl-L-aspartate + phosphate + H(+). The protein operates within pyrimidine metabolism; UMP biosynthesis via de novo pathway; (S)-dihydroorotate from bicarbonate: step 2/3. Catalyzes the condensation of carbamoyl phosphate and aspartate to form carbamoyl aspartate and inorganic phosphate, the committed step in the de novo pyrimidine nucleotide biosynthesis pathway. The chain is Aspartate carbamoyltransferase catalytic subunit from Streptococcus suis (strain 98HAH33).